We begin with the raw amino-acid sequence, 118 residues long: UPF0295 protein BT9727_0449 (118 aa).

The next 2 helical transmembrane spans lie at 12-32 and 43-63; these read IRTF…LGVF and FMMV…WIGM.

It belongs to the UPF0295 family.

The protein resides in the cell membrane. The polypeptide is UPF0295 protein BT9727_0449 (Bacillus thuringiensis subsp. konkukian (strain 97-27)).